Reading from the N-terminus, the 771-residue chain is ATP-dependent RNA helicase DRS1 (771 aa).

Disordered stretches follow at residues 1-96 (MAKK…LDGF), 109-128 (VESNGDVTKKPISKDVDLDG), and 134-233 (GGLA…KPVE). The segment covering 28–46 (SDSEGENEIPDLEEESEVD) has biased composition (acidic residues). Positions 33-84 (ENEIPDLEEESEVDQELKEEEKPKPKPKPKSKKNKKNKDINNDQEKTEEQEE) form a coiled coil. Residues 47–56 (QELKEEEKPK) show a composition bias toward basic and acidic residues. The segment covering 57-68 (PKPKPKSKKNKK) has biased composition (basic residues). The span at 69-79 (NKDINNDQEKT) shows a compositional bias: basic and acidic residues. Residues 85 to 96 (INPNFTFSLDGF) show a composition bias toward polar residues. Acidic residues-rich tracts occupy residues 149-182 (KNDEVESEEVEEVEEDDEDEENEQEGDDDDDELA) and 197-233 (ADDDQDEQEPEDDDEGVEADMDEEYPGSDQEDEKPVE). The Q motif signature appears at 258-286 (TTFQSLQLSRPVLKGLSQLGYTKPSPIQS). The Helicase ATP-binding domain occupies 289 to 465 (IPIALLGKDI…QLSLQKPVRV (177 aa)). ATP is bound at residue 302–309 (AVTGSGKT). The short motif at 412–415 (DEAD) is the DEAD box element. A Helicase C-terminal domain is found at 476–643 (KLVQEFVRIR…RNSKQGKAVS (168 aa)). A compositionally biased stretch (basic and acidic residues) spans 695–717 (EKEIQSRPRRTWFESEKDKKHQT). Residues 695 to 771 (EKEIQSRPRR…KPKSNGKNKK (77 aa)) are disordered. Composition is skewed to basic residues over residues 725–736 (KHGKKVNSHKRK) and 759–771 (VQKKPKSNGKNKK).

It belongs to the DEAD box helicase family. DDX27/DRS1 subfamily. In terms of assembly, associates with pre-ribosomal particles.

It is found in the nucleus. Its subcellular location is the nucleolus. It carries out the reaction ATP + H2O = ADP + phosphate + H(+). Its function is as follows. ATP-binding RNA helicase involved in ribosome assembly. In Debaryomyces hansenii (strain ATCC 36239 / CBS 767 / BCRC 21394 / JCM 1990 / NBRC 0083 / IGC 2968) (Yeast), this protein is ATP-dependent RNA helicase DRS1 (DRS1).